Consider the following 183-residue polypeptide: Proton-transporting V-type ATPase complex assembly regulator TMEM9 (183 aa).

A signal peptide spans 1–20; it reads MKLLSLVAVVGCLLVPPAEA. Residues Asn-21, Asn-38, and Asn-47 are each glycosylated (N-linked (GlcNAc...) asparagine). Residues 21–89 are Extracellular-facing; it reads NKSSEDIRCK…YEERSTTTIK (69 aa). A helical membrane pass occupies residues 90 to 110; it reads VIIVIYLSVVGALLLYMAFLM. Over 111-183 the chain is Cytoplasmic; it reads LVDPLIRKPD…TVFDRHKMLS (73 aa). A phosphoserine mark is found at Ser-137 and Ser-144.

The protein belongs to the TMEM9 family. In terms of assembly, interacts with the v-ATPase accessory protein ATP6AP2 and with the v-ATPase complex subunit ATP6V0D1; these interactions lead to the assembly of the v-ATPase complex. In terms of processing, N-glycosylated. In terms of tissue distribution, highly expressed in adrenal gland, thyroid gland, testis, ovary and prostate. Moderate expression in trachea, spinal cord, stomach, colon, small intestine and spleen. Low expression in bone marrow, lymph node, thymus and peripheral blood lymphocytes. Expression is detected in hematopoietic cell lines including those of myeloid, erythroid, B- and T-cell origin.

It localises to the lysosome membrane. It is found in the late endosome membrane. Its subcellular location is the endosome. The protein localises to the multivesicular body membrane. In terms of biological role, transmembrane protein that binds to and facilitates the assembly of lysosomal proton-transporting V-type ATPase (v-ATPase), resulting in enhanced lysosomal acidification and trafficking. By bringing the v-ATPase accessory protein ATP6AP2 and the v-ATPase subunit ATP6V0D1 together, allows v-ATPase complex formation and activation. TMEM9-controlled vesicular acidification induces hyperactivation of Wnt/beta-catenin signaling, involved in development, tissue homeostasis and tissue regeneration, through lysosomal degradation of adenomatous polyposis coli/APC. In the liver, involved in hepatic regeneration. In Homo sapiens (Human), this protein is Proton-transporting V-type ATPase complex assembly regulator TMEM9.